The following is a 1208-amino-acid chain: ATP-dependent DNA helicase Q4 (1208 aa).

Disordered stretches follow at residues Ala17–Ser180 and Phe201–Ala333. The residue at position 27 (Ser27) is a Phosphoserine. Positions Glu36–Thr47 are enriched in basic and acidic residues. Residues Ser61–Glu70 show a composition bias toward low complexity. Residues Ala86–Gly100 show a composition bias toward polar residues. Residues Ser178 and Ser180 each carry the phosphoserine modification. Residues Ala273 to Gly283 are compositionally biased toward polar residues. The 174-residue stretch at Val489–Pro662 folds into the Helicase ATP-binding domain. Residue Leu502 to Ser509 participates in ATP binding. The DEAH box signature appears at Asp605 to His608. The 168-residue stretch at Asp683 to Phe850 folds into the Helicase C-terminal domain. 2 residues coordinate Zn(2+): Cys853 and Cys855. The interval Pro860–Gln888 is disordered. The Zn(2+) site is built by Cys897 and His900. Positions Glu1111 to Ala1130 are disordered. Residues Gly1117–Arg1208 are increases helicase activity about 5-fold (in a fragment starting at residue 427).

It belongs to the helicase family. RecQ subfamily. As to quaternary structure, interacts with UBR1 and UBR2. Interacts with MCM10; this interaction regulates RECQL4 unwinding activity. Interacts (via residues 1-54) with TOPBP1. Zn(2+) is required as a cofactor. Ubiquitously expressed, with highest levels in thymus and testis.

It localises to the cytoplasm. It is found in the nucleus. It catalyses the reaction Couples ATP hydrolysis with the unwinding of duplex DNA by translocating in the 3'-5' direction.. The enzyme catalyses ATP + H2O = ADP + phosphate + H(+). An ATP-dependent DNA helicase which unwinds dsDNA with a 3'-overhang in a 3'-5' direction. Does not unwind more than 18 bp of dsDNA. May modulate chromosome segregation. The N-terminal domain (residues 1-54) binds DNA Y-shaped DNA better than ss- or dsDNA. The core helicase domain binds ssDNA. This chain is ATP-dependent DNA helicase Q4 (RECQL4), found in Homo sapiens (Human).